We begin with the raw amino-acid sequence, 267 residues long: Methyl-coenzyme M reductase II subunit gamma (267 aa).

Residue arginine 123 participates in coenzyme M binding.

This sequence belongs to the methyl-coenzyme M reductase gamma subunit family. In terms of assembly, MCR is a hexamer of two alpha, two beta, and two gamma chains, forming a dimer of heterotrimers. It depends on coenzyme F430 as a cofactor.

It carries out the reaction coenzyme B + methyl-coenzyme M = methane + coenzyme M-coenzyme B heterodisulfide. It functions in the pathway one-carbon metabolism; methyl-coenzyme M reduction; methane from methyl-coenzyme M: step 1/1. Its function is as follows. Component of the methyl-coenzyme M reductase (MCR) I that catalyzes the reductive cleavage of methyl-coenzyme M (CoM-S-CH3 or 2-(methylthio)ethanesulfonate) using coenzyme B (CoB or 7-mercaptoheptanoylthreonine phosphate) as reductant which results in the production of methane and the mixed heterodisulfide of CoB and CoM (CoM-S-S-CoB). This is the final step in methanogenesis. This is Methyl-coenzyme M reductase II subunit gamma (mrtG) from Methanothermus fervidus (strain ATCC 43054 / DSM 2088 / JCM 10308 / V24 S).